The sequence spans 88 residues: Small ribosomal subunit protein bS20 (88 aa).

Belongs to the bacterial ribosomal protein bS20 family.

Its function is as follows. Binds directly to 16S ribosomal RNA. The polypeptide is Small ribosomal subunit protein bS20 (Bradyrhizobium diazoefficiens (strain JCM 10833 / BCRC 13528 / IAM 13628 / NBRC 14792 / USDA 110)).